The following is a 257-amino-acid chain: A-factor type gamma-butyrolactone 1'-reductase (1S-forming) (257 aa).

Tyr-161 acts as the Proton acceptor in catalysis.

It belongs to the short-chain dehydrogenases/reductases (SDR) family. As to quaternary structure, homodimer.

It catalyses the reaction a (3R,4R)-3-[(1S)-1-hydroxyalkyl]-4-(hydroxymethyl)oxolan-2-one + NADP(+) = a (3R,4R)-3-alkanoyl-4-(hydroxymethyl)oxolan-2-one + NADPH + H(+). Involved in the biosynthesis of virginiae butanolide (VB), which regulates the production of antibiotic virginiamycin. Catalyzes the reduction of 6-dehydro-VB-A to VB-A, the last catalytic step in VB biosynthesis. In vitro, can use various synthetic A-factor-type analogs. This is A-factor type gamma-butyrolactone 1'-reductase (1S-forming) from Streptomyces virginiae (Streptomyces cinnamonensis).